We begin with the raw amino-acid sequence, 636 residues long: 1-deoxy-D-xylulose-5-phosphate synthase (636 aa).

Thiamine diphosphate is bound by residues histidine 72 and 113-115; that span reads GHA. Position 144 (aspartate 144) interacts with Mg(2+). Residues 145–146, asparagine 174, tyrosine 287, and glutamate 370 each bind thiamine diphosphate; that span reads GA. Residue asparagine 174 participates in Mg(2+) binding.

It belongs to the transketolase family. DXPS subfamily. Homodimer. It depends on Mg(2+) as a cofactor. The cofactor is thiamine diphosphate.

The enzyme catalyses D-glyceraldehyde 3-phosphate + pyruvate + H(+) = 1-deoxy-D-xylulose 5-phosphate + CO2. It participates in metabolic intermediate biosynthesis; 1-deoxy-D-xylulose 5-phosphate biosynthesis; 1-deoxy-D-xylulose 5-phosphate from D-glyceraldehyde 3-phosphate and pyruvate: step 1/1. Functionally, catalyzes the acyloin condensation reaction between C atoms 2 and 3 of pyruvate and glyceraldehyde 3-phosphate to yield 1-deoxy-D-xylulose-5-phosphate (DXP). This chain is 1-deoxy-D-xylulose-5-phosphate synthase, found in Crocosphaera subtropica (strain ATCC 51142 / BH68) (Cyanothece sp. (strain ATCC 51142)).